Reading from the N-terminus, the 538-residue chain is Dolichol kinase (538 aa).

The Lumenal segment spans residues 1–18 (MTRECAPPTPGSGAPLSG). A helical membrane pass occupies residues 19-39 (SVLAEAAVVFVVVLSIHAAVW). Over 40-74 (DRYSWCAVALAVQAFYVQYKWDRLLQQGSAVFQFR) the chain is Cytoplasmic. A helical transmembrane segment spans residues 75-95 (MSANSGLLPASVVMPLLGLVM). At 96–111 (KERCQAAGNPYFERFG) the chain is on the lumenal side. The chain crosses the membrane as a helical span at residues 112 to 132 (IVVAATGMAVALFSSVLALGI). At 133–134 (TR) the chain is on the cytoplasmic side. Residues 135–155 (PVPTNTCVISGLAGGVIIYIM) traverse the membrane as a helical segment. Topologically, residues 156-163 (KHSLSVGE) are lumenal. The helical transmembrane segment at 164-184 (VIEVLEALLIFVYLNMILLYL) threads the bilayer. At 185 to 188 (LPRC) the chain is on the cytoplasmic side. The helical transmembrane segment at 189-209 (FTPGEALLVLGGISFMLNQLI) threads the bilayer. The Lumenal segment spans residues 210–224 (KRSLTVVESQGDPLD). Residues 225 to 245 (FFLLVVVVGMVLMGIFFSTLF) form a helical membrane-spanning segment. At 246–254 (VFMDSGTWA) the chain is on the cytoplasmic side. Residues 255–275 (SSIFFHLMTCVLGLGVVLPWL) form a helical membrane-spanning segment. At 276–297 (HRLIRRNPLLWLFQFLFQTETR) the chain is on the lumenal side. Residues 298–318 (VYLLAYWCLLATVACLVVLYQ) form a helical membrane-spanning segment. Topologically, residues 319-337 (NAKRSSSESKKHQAPTITR) are cytoplasmic. Residues 338 to 354 (KYFHFIVVATYIPGIIL) form a helical membrane-spanning segment. Residues 355 to 359 (DRPLL) are Lumenal-facing. The chain crosses the membrane as a helical span at residues 360–380 (YVAATVCLAVFIFLEYVRYFR). Topologically, residues 381–401 (IKPLGHTLRSLLSLFLDERDS) are cytoplasmic. A helical transmembrane segment spans residues 402–422 (GPLILTHIYLLLGMSLPIWLV). Over 423-436 (PRPCTQKGSLGGAR) the chain is Lumenal. A helical membrane pass occupies residues 437-457 (ALVPYAGVLAVGVGDTVASIF). Topologically, residues 458-472 (GSTMGEIRWPGTKKT) are cytoplasmic. The interval 459–474 (STMGEIRWPGTKKTFE) is CTP-binding. The helical transmembrane segment at 473-493 (FEGTMTSIFAQIISVALILIF) threads the bilayer. At 494–495 (DS) the chain is on the lumenal side. A helical membrane pass occupies residues 496-516 (GVDLNYSYAWILGSISTVSLL). The Cytoplasmic segment spans residues 517–538 (EAYTTQIDNLLLPLYLLILLMA).

The protein belongs to the polyprenol kinase family.

It is found in the endoplasmic reticulum membrane. It carries out the reaction a di-trans,poly-cis-dolichol + CTP = a di-trans,poly-cis-dolichyl phosphate + CDP + H(+). Its pathway is protein modification; protein glycosylation. Its function is as follows. Catalyzes CTP-mediated phosphorylation of dolichol, the terminal step in de novo dolichyl monophosphate (Dol-P) biosynthesis. Dol-P is a lipid carrier essential for the synthesis of N-linked and O-linked oligosaccharides and for GPI anchors. In Bos taurus (Bovine), this protein is Dolichol kinase (DOLK).